The primary structure comprises 333 residues: Low specificity L-threonine aldolase (333 aa).

Lys197 bears the N6-(pyridoxal phosphate)lysine mark.

Belongs to the threonine aldolase family. In terms of assembly, homotetramer. Pyridoxal 5'-phosphate serves as cofactor.

The catalysed reaction is L-threonine = acetaldehyde + glycine. It catalyses the reaction L-allo-threonine = acetaldehyde + glycine. Catalyzes the cleavage of L-allo-threonine and L-threonine to glycine and acetaldehyde. L-threo-phenylserine and L-erythro-phenylserine are also good substrates. The chain is Low specificity L-threonine aldolase (ltaE) from Escherichia coli (strain K12).